Here is a 557-residue protein sequence, read N- to C-terminus: Formate--tetrahydrofolate ligase (557 aa).

44–51 (TPLGEGKS) serves as a coordination point for ATP.

Belongs to the formate--tetrahydrofolate ligase family.

It carries out the reaction (6S)-5,6,7,8-tetrahydrofolate + formate + ATP = (6R)-10-formyltetrahydrofolate + ADP + phosphate. The protein operates within one-carbon metabolism; tetrahydrofolate interconversion. The chain is Formate--tetrahydrofolate ligase from Desulfotalea psychrophila (strain LSv54 / DSM 12343).